A 108-amino-acid polypeptide reads, in one-letter code: Nucleoid-associated protein BMASAVP1_A1850 (108 aa).

Positions 84–108 (EATSQEKMSGMTSGLPLPPGFKLPF) are disordered. Residues 85–95 (ATSQEKMSGMT) show a composition bias toward polar residues. Residues 99 to 108 (PLPPGFKLPF) show a composition bias toward pro residues.

The protein belongs to the YbaB/EbfC family. As to quaternary structure, homodimer.

It is found in the cytoplasm. It localises to the nucleoid. Functionally, binds to DNA and alters its conformation. May be involved in regulation of gene expression, nucleoid organization and DNA protection. The protein is Nucleoid-associated protein BMASAVP1_A1850 of Burkholderia mallei (strain SAVP1).